A 636-amino-acid chain; its full sequence is 3-phosphoinositide-dependent protein kinase 1 (636 aa).

Low complexity-rich tracts occupy residues 1 to 20 (MEDL…NNDT) and 27 to 37 (APTTLNLTPTA). The tract at residues 1 to 45 (MEDLTPTNTSLDTTTTNNDTTSDREAAPTTLNLTPTASESENSLS) is disordered. Residues 69–364 (FMFLQSMGEG…SQELMAHKFF (296 aa)) enclose the Protein kinase domain. Residues 79-81 (AYS) and Lys98 contribute to the ATP site. The tract at residues 100 to 149 (LQKSYLNRHQKMDAIIREKNILTYLSQECGGHPFVTQLYTHFHDQARIYF) is PIF-pocket. ATP is bound by residues 152–154 (GLV) and Asp158. Asp197 acts as the Proton acceptor in catalysis. 2 residues coordinate ATP: Asp201 and Asp215. Disordered regions lie at residues 233–264 (TDAN…EENT) and 593–636 (KKSR…KKSP). Positions 550 to 631 (DLEKKADEWC…QVSKKLSMQM (82 aa)) form a coiled coil. A compositionally biased stretch (basic and acidic residues) spans 597 to 624 (KEMMREQKALRRKQEKEEKKALKAEQVS).

This sequence belongs to the protein kinase superfamily. AGC Ser/Thr protein kinase family. PDPK1 subfamily. In terms of assembly, interacts directly with sgk-1, akt-1 and akt-2.

The protein localises to the cytoplasm. The enzyme catalyses L-seryl-[protein] + ATP = O-phospho-L-seryl-[protein] + ADP + H(+). It carries out the reaction L-threonyl-[protein] + ATP = O-phospho-L-threonyl-[protein] + ADP + H(+). Functionally, involved in the daf-2/insulin receptor-like transduction pathway, which controls longevity and prevents developmental arrest at the dauer stage. Phosphorylates and activates sgk-1, akt-1 and akt-2. The protein is 3-phosphoinositide-dependent protein kinase 1 of Caenorhabditis elegans.